We begin with the raw amino-acid sequence, 459 residues long: Pup--protein ligase (459 aa).

Glutamate 9 provides a ligand contact to Mg(2+). Arginine 54 provides a ligand contact to ATP. Tyrosine 56 contacts Mg(2+). Aspartate 58 functions as the Proton acceptor in the catalytic mechanism. Mg(2+) is bound at residue glutamate 64. Positions 67 and 421 each coordinate ATP.

The protein belongs to the Pup ligase/Pup deamidase family. Pup-conjugating enzyme subfamily.

It carries out the reaction ATP + [prokaryotic ubiquitin-like protein]-L-glutamate + [protein]-L-lysine = ADP + phosphate + N(6)-([prokaryotic ubiquitin-like protein]-gamma-L-glutamyl)-[protein]-L-lysine.. It functions in the pathway protein degradation; proteasomal Pup-dependent pathway. The protein operates within protein modification; protein pupylation. Functionally, catalyzes the covalent attachment of the prokaryotic ubiquitin-like protein modifier Pup to the proteasomal substrate proteins, thereby targeting them for proteasomal degradation. This tagging system is termed pupylation. The ligation reaction involves the side-chain carboxylate of the C-terminal glutamate of Pup and the side-chain amino group of a substrate lysine. The chain is Pup--protein ligase from Jonesia denitrificans (strain ATCC 14870 / DSM 20603 / BCRC 15368 / CIP 55.134 / JCM 11481 / NBRC 15587 / NCTC 10816 / Prevot 55134) (Listeria denitrificans).